We begin with the raw amino-acid sequence, 1150 residues long: Protogenin (1150 aa).

The N-terminal stretch at 1–35 (MAPPLRPLARLRPPGMLLRALLLLLLLSPLPGVWC) is a signal peptide. 4 consecutive Ig-like domains span residues 36–130 (FSEL…AHLA), 135–222 (SAFE…ASLT), 235–322 (PTII…ATLT), and 327–411 (PSFV…ARLT). Residues 36-949 (FSELSFVKEP…YYHLDQKSMT (914 aa)) lie on the Extracellular side of the membrane. 4 disulfides stabilise this stretch: Cys60–Cys113, Cys156–Cys205, Cys256–Cys304, and Cys348–Cys395. The N-linked (GlcNAc...) asparagine glycan is linked to Asn90. 5 Fibronectin type-III domains span residues 421–515 (APYN…TLED), 517–613 (PLRP…TPKA), 618–717 (APKS…VRDR), 724–817 (PPHH…TLPE), and 822–917 (PPVG…VLPK). Asn488 carries N-linked (GlcNAc...) asparagine glycosylation. The N-linked (GlcNAc...) asparagine glycan is linked to Asn630. A helical transmembrane segment spans residues 950-970 (GIAVGVGIALTCILICVLILI). Over 971-1150 (YRSKARKSSA…SVISTTPPNL (180 aa)) the chain is Cytoplasmic. Disordered stretches follow at residues 981–1002 (SKTA…ASGN) and 1086–1150 (ISDE…PPNL). Polar residues-rich tracts occupy residues 983-1000 (TAQN…SLAS) and 1092-1102 (PSSPGQTTSFS). Residues 1110–1138 (DTEHSANSEGSHETGDSGRFSHESNDEIH) are compositionally biased toward basic and acidic residues. Polar residues predominate over residues 1141–1150 (SVISTTPPNL).

This sequence belongs to the immunoglobulin superfamily. DCC family.

Its subcellular location is the membrane. Its function is as follows. May play a role in anteroposterior axis elongation. The protein is Protogenin of Homo sapiens (Human).